The primary structure comprises 225 residues: Uracil-DNA glycosylase (225 aa).

Asp-68 (proton acceptor) is an active-site residue.

Belongs to the uracil-DNA glycosylase (UDG) superfamily. UNG family.

The protein localises to the cytoplasm. It carries out the reaction Hydrolyzes single-stranded DNA or mismatched double-stranded DNA and polynucleotides, releasing free uracil.. Excises uracil residues from the DNA which can arise as a result of misincorporation of dUMP residues by DNA polymerase or due to deamination of cytosine. The protein is Uracil-DNA glycosylase of Parafrankia sp. (strain EAN1pec).